We begin with the raw amino-acid sequence, 493 residues long: Probable cytochrome P450 CYP36A1 (493 aa).

Transmembrane regions (helical) follow at residues 1-21 (MLFA…CRFA), 60-80 (GGIF…YDML), and 290-310 (QLIV…IIVL). Heme is bound at residue Cys-440.

It belongs to the cytochrome P450 family. Heme is required as a cofactor.

The protein localises to the membrane. Functionally, cytochromes P450 are a group of heme-thiolate monooxygenases. They oxidize a variety of structurally unrelated compounds, including steroids, fatty acids, and xenobiotics. The protein is Probable cytochrome P450 CYP36A1 (cyp-36A1) of Caenorhabditis elegans.